The following is a 127-amino-acid chain: Anti-adapter protein IraD (127 aa).

The protein belongs to the GpW/Gp25 family. IraD subfamily. As to quaternary structure, interacts with RssB.

The protein resides in the cytoplasm. In terms of biological role, inhibits RpoS proteolysis by regulating RssB activity, thereby increasing the stability of the sigma stress factor RpoS during oxidative stress. Its effect on RpoS stability is due to its interaction with RssB, which probably blocks the interaction of RssB with RpoS, and the consequent delivery of the RssB-RpoS complex to the ClpXP protein degradation pathway. This chain is Anti-adapter protein IraD, found in Escherichia coli O6:K15:H31 (strain 536 / UPEC).